The sequence spans 773 residues: MKMRGEKRRDKVNPKSSQRKLNWIPSFPTYDYFNQVTLQLLDGFMITLSTDGVIICVAENISSLLGHLPAEIVGKKLLSLLPDEEKDEVYQKIILKFPLLNSETHIEFCCHLKRGNVEHGDSSAYENVKFIVNVRDICNEFPVVFSGLFSSHLCADFAACVPQEDRLYLVGNVCILRTQLLQQLYTSKAVSDEAVLTQDSDEEPFVGELSSSQGQRGHTSMKAVYVEPAAAAAAAAISDDQIDIAEVEQYGPQENVHMFVDSDSTYCSSTVFLDTMPESPALSLQDFRGEPEVNPLYRADPVDLEFSVDQVDSVDQEGPMDQQDPENPVAPLDQAGLMDPVDPEDSVDLGAAGASAQPLQPSSPVAYDIISQELELMKKLKEQLEERTWLLHDAIQNQQNALELMMDHLQKQPNTLRHVVIPDLQSSEAVPKKQQKQHAGQVKRPLPHPKDVKCFCGLSLSNSLKNTGELQEPCVAFNQQQLVQQEQHLKEQQRQLREQLQQLREQRKVQKQKKMQEKKKLQEQKMQEKKKLQEQRRQKKKKLQERKKWQGQMLQKEPEEEQQKQQLQEQPLKHNVIVGNERVQICLQNPRDVSVPLCNHPVRFLQAQPIVPVQRAAEQQPSGFYQDENCGQQEDESQSFYPEAYQGPPVNQLPLIDTSNSEAISSSSIPQFPITSDSTISTLETPQDYIRLWQELSDSLGPVVQVNTWSCDEQGTLHGQPTYHQVQVSEVGVEGPPDPQAFQGPAAYQPDQMRSAEQTRLMPAEQRDSNKPC.

The PAS domain occupies 30–102 (YDYFNQVTLQ…IILKFPLLNS (73 aa)). The interval 313–361 (SVDQEGPMDQQDPENPVAPLDQAGLMDPVDPEDSVDLGAAGASAQPLQP) is disordered. The segment at 365-412 (VAYDIISQELELMKKLKEQLEERTWLLHDAIQNQQNALELMMDHLQKQ) is necessary for transcriptional repression. Residues 365–412 (VAYDIISQELELMKKLKEQLEERTWLLHDAIQNQQNALELMMDHLQKQ) adopt a coiled-coil conformation. Disordered stretches follow at residues 427-448 (SEAV…PLPH), 506-569 (QRKV…QLQE), and 732-773 (GVEG…NKPC). The stretch at 475–553 (VAFNQQQLVQ…QERKKWQGQM (79 aa)) forms a coiled coil. Basic and acidic residues predominate over residues 506–536 (QRKVQKQKKMQEKKKLQEQKMQEKKKLQEQR).

As to quaternary structure, interacts with the CLOCK-BMAL1 heterodimer; this interaction inhibits CLOCK-BMAL1 transcriptional activation and suppress circadian timekeeping. Interacts with BMAL1. As to expression, testis-specific. Expressed in a broad range of cancer cells, including melanoma, lung cancer, and breast cancer (at protein level). Testis-specific. Found in histologically normal tissues from patients with uterus, lung and small intestine cancers. Widespread expression seen in solid tumors and diffuse large B-cell lymphoma (DLBCL)-derived cell lines. Isoform 2 is expressed in all DLBCL-derived cell lines, while isoform 1 is preferentially expressed in cell lines derived from non-germinal center DLBCL.

It is found in the nucleus. Functionally, functions as a suppressor of the biological clock that drives the daily circadian rhythms of cells throughout the body. Acts as a nuclear repressor of the CLOCK-BMAL1 heterodimer-mediated transcriptional activation of the core clock components. Inhibits circadian clock function in cancer cells, when overexpressed. The protein is Circadian clock protein PASD1 of Homo sapiens (Human).